The chain runs to 288 residues: Syntaxin-1A (288 aa).

The segment covering 1-13 (MKDRTQELRTAKD) has biased composition (basic and acidic residues). A disordered region spans residues 1-20 (MKDRTQELRTAKDSDDDDDV). The Cytoplasmic portion of the chain corresponds to 1-265 (MKDRTQELRT…KYQSKARRKK (265 aa)). A phosphoserine mark is found at S14, S64, and S95. Residues 68–109 (DEKTKEELEELMSDIKKTANKVRSKLKSIEQSIEQEEGLNRS) adopt a coiled-coil conformation. S188 carries the phosphoserine; by DAPK1 modification. The t-SNARE coiled-coil homology domain occupies 192–254 (LSEIETRHSE…ERAVSDTKKA (63 aa)). Residues K252, K253, and K256 each participate in a glycyl lysine isopeptide (Lys-Gly) (interchain with G-Cter in SUMO) cross-link. A helical; Anchor for type IV membrane protein membrane pass occupies residues 266-288 (IMIIICCVILGIIIASTIGGIFG).

Belongs to the syntaxin family. As to quaternary structure, part of the SNARE core complex containing SNAP25, VAMP2 and STX1A; this complex constitutes the basic catalytic machinery of the complex neurotransmitter release apparatus. The SNARE complex interacts with CPLX1. Interacts with STXBP1. The interaction with STXBP1 promotes assembly of the SNARE complex. Interacts (via C-terminus) with KCNB1 (via C-terminus); the interaction increases in a calcium-dependent manner and induces a pore-independent enhancement of exocytosis in neuroendocrine cells, chromaffin cells, pancreatic beta cells and from the soma of dorsal root ganglia (DRG) neurons. Interacts with SYTL4. Interacts with STXBP6. Interacts with PLCL1 (via C2 domain). Interacts with OTOF. Interacts with LGI3. Interacts (via the H3 domain) with SLC6A4 (via the N-terminus); this interaction regulates SLC4A6 channel conductance in thalamocortical neurons. Interacts with SYT6 and SYT8; the interaction is Ca(2+)-dependent. Interacts with VAMP8. Interacts with SNAP23. Interacts with VAPA and SYBU. Interacts with PRRT2. Interacts with SEPT8. Interacts with STXBP5L. Interacts with synaptotagmin-1/SYT1. Interacts with SEPTIN5; in the cerebellar cortex. Interacts with SEPTIN4; in the striatum. In terms of processing, phosphorylated by CK2. Phosphorylation at Ser-188 by DAPK1 significantly decreases its interaction with STXBP1. Post-translationally, (Microbial infection) Targeted and hydrolyzed by C.botulinum neurotoxin type C (BoNT/C), which hydrolyzes the 253-Lys-|-Ala-254 bond. Cleavage inhibits neurotransmitter release. Phosphorylated by CK2. Phosphorylation at Ser-188 by DAPK1 significantly decreases its interaction with STXBP1. In terms of processing, sumoylated, sumoylation is required for regulation of synaptic vesicle endocytosis. As to expression, expressed predominantly in cerebral cortex, hippocampus, cerebellum, adrenal medulla and retina with weak expression detected in non-neuronal tissues.

The protein localises to the cytoplasmic vesicle. Its subcellular location is the secretory vesicle. The protein resides in the synaptic vesicle membrane. It is found in the cell membrane. It localises to the synapse. The protein localises to the synaptosome. Its function is as follows. Plays an essential role in hormone and neurotransmitter calcium-dependent exocytosis and endocytosis. Part of the SNARE (Soluble NSF Attachment Receptor) complex composed of SNAP25, STX1A and VAMP2 which mediates the fusion of synaptic vesicles with the presynaptic plasma membrane. STX1A and SNAP25 are localized on the plasma membrane while VAMP2 resides in synaptic vesicles. The pairing of the three SNAREs from the N-terminal SNARE motifs to the C-terminal anchors leads to the formation of the SNARE complex, which brings membranes into close proximity and results in final fusion. Participates in the calcium-dependent regulation of acrosomal exocytosis in sperm. Also plays an important role in the exocytosis of hormones such as insulin or glucagon-like peptide 1 (GLP-1). This Rattus norvegicus (Rat) protein is Syntaxin-1A (Stx1a).